Reading from the N-terminus, the 239-residue chain is tRNA (guanine-N(7)-)-methyltransferase (239 aa).

4 residues coordinate S-adenosyl-L-methionine: glutamate 68, glutamate 93, aspartate 120, and aspartate 143. Aspartate 143 is an active-site residue. Residues lysine 147, aspartate 180, and 217 to 220 (TKFE) each bind substrate.

It belongs to the class I-like SAM-binding methyltransferase superfamily. TrmB family.

It carries out the reaction guanosine(46) in tRNA + S-adenosyl-L-methionine = N(7)-methylguanosine(46) in tRNA + S-adenosyl-L-homocysteine. It functions in the pathway tRNA modification; N(7)-methylguanine-tRNA biosynthesis. Catalyzes the formation of N(7)-methylguanine at position 46 (m7G46) in tRNA. The chain is tRNA (guanine-N(7)-)-methyltransferase from Vibrio vulnificus (strain CMCP6).